Here is a 295-residue protein sequence, read N- to C-terminus: Pyridoxal 5'-phosphate synthase subunit PdxS (295 aa).

Position 25 (aspartate 25) interacts with D-ribose 5-phosphate. The active-site Schiff-base intermediate with D-ribose 5-phosphate is lysine 82. D-ribose 5-phosphate is bound at residue glycine 154. Arginine 166 contacts D-glyceraldehyde 3-phosphate. D-ribose 5-phosphate is bound by residues glycine 215 and 236–237; that span reads GS.

It belongs to the PdxS/SNZ family. As to quaternary structure, in the presence of PdxT, forms a dodecamer of heterodimers.

The catalysed reaction is aldehydo-D-ribose 5-phosphate + D-glyceraldehyde 3-phosphate + L-glutamine = pyridoxal 5'-phosphate + L-glutamate + phosphate + 3 H2O + H(+). It functions in the pathway cofactor biosynthesis; pyridoxal 5'-phosphate biosynthesis. Functionally, catalyzes the formation of pyridoxal 5'-phosphate from ribose 5-phosphate (RBP), glyceraldehyde 3-phosphate (G3P) and ammonia. The ammonia is provided by the PdxT subunit. Can also use ribulose 5-phosphate and dihydroxyacetone phosphate as substrates, resulting from enzyme-catalyzed isomerization of RBP and G3P, respectively. The protein is Pyridoxal 5'-phosphate synthase subunit PdxS of Macrococcus caseolyticus (strain JCSC5402) (Macrococcoides caseolyticum).